A 931-amino-acid chain; its full sequence is Protocadherin gamma-A1 (931 aa).

The first 28 residues, 1 to 28, serve as a signal peptide directing secretion; sequence MKIQKKLTGCSRLMLLCLSLELLLEAGA. Cadherin domains lie at 29–133, 134–242, 243–347, 348–452, 453–562, and 570–682; these read GNIH…TPQF, QLEE…PPAF, TQAQ…APEV, TITS…SPVF, HQDS…APEI, and DGST…EPSA. The Extracellular portion of the chain corresponds to 29-692; sequence GNIHYSVPEE…KPNDSDLTLY (664 aa). N-linked (GlcNAc...) asparagine glycans are attached at residues Asn-265, Asn-419, and Asn-545. Asn-685 carries N-linked (GlcNAc...) asparagine glycosylation. The chain crosses the membrane as a helical span at residues 693 to 713; sequence LVVAAAAVSCVFLAFVIVLLA. Residues 714 to 931 lie on the Cytoplasmic side of the membrane; sequence HRLRRWHKSR…KKKSGKKEKK (218 aa). 2 disordered regions span residues 801–840 and 901–931; these read KKEP…WPNN and ATLT…KEKK. The span at 805–840 shows a compositional bias: polar residues; the sequence is FSQQAPPNTDWRFSQAQRPGTSGSQNGDDTGTWPNN. A compositionally biased stretch (basic residues) spans 921-931; that stretch reads NKKKSGKKEKK.

The protein resides in the cell membrane. Its function is as follows. Potential calcium-dependent cell-adhesion protein. May be involved in the establishment and maintenance of specific neuronal connections in the brain. The protein is Protocadherin gamma-A1 (PCDHGA1) of Homo sapiens (Human).